We begin with the raw amino-acid sequence, 334 residues long: Adenosine deaminase (334 aa).

2 residues coordinate Zn(2+): H12 and H14. Residues H14, D16, and G170 each contribute to the substrate site. Residue H197 coordinates Zn(2+). The active-site Proton donor is the E200. Position 278 (D278) interacts with Zn(2+). D279 is a binding site for substrate.

The protein belongs to the metallo-dependent hydrolases superfamily. Adenosine and AMP deaminases family. Adenosine deaminase subfamily. It depends on Zn(2+) as a cofactor.

It carries out the reaction adenosine + H2O + H(+) = inosine + NH4(+). The enzyme catalyses 2'-deoxyadenosine + H2O + H(+) = 2'-deoxyinosine + NH4(+). Catalyzes the hydrolytic deamination of adenosine and 2-deoxyadenosine. This Vibrio cholerae serotype O1 (strain ATCC 39541 / Classical Ogawa 395 / O395) protein is Adenosine deaminase.